The following is a 142-amino-acid chain: Maximins y/H11 (142 aa).

The N-terminal stretch at 1–18 is a signal peptide; it reads MNFKYIVAVSFLITSGYA. Residues 19–43 constitute a propeptide that is removed on maturation; it reads ESVKNDEQSLSQRDVLEEESLREIR. Residue Phe68 is modified to Phenylalanine amide. Positions 72 to 121 are excised as a propeptide; sequence SAEDHEVMKRLEAVIRDLDSLDHPEEASERETRGFNQEEIANLFTKKEKR. Isoleucine amide is present on Ile141.

This sequence belongs to the bombinin family. In terms of tissue distribution, expressed by the skin glands.

It is found in the secreted. Its function is as follows. Maximin-y shows antimicrobial activity against bacteria and against the fungus C.albicans. It has little hemolytic activity. Maximin-H11 shows antimicrobial activity against bacteria and against the fungus C.albicans. Shows strong hemolytic activity. The chain is Maximins y/H11 from Bombina maxima (Giant fire-bellied toad).